We begin with the raw amino-acid sequence, 544 residues long: Inward rectifier potassium channel irk-1 (544 aa).

The Cytoplasmic segment spans residues 1–109 (MTLSVPDCAE…IFTTMIDVKW (109 aa)). A helical transmembrane segment spans residues 110–134 (RWMLMLFASAFVLSWSIFGTTYYLI). The Extracellular segment spans residues 135–158 (ALVHGDLSLPTPVNHTACVMNLDS). Positions 159-170 (VYSSFLFAVETH) form an intramembrane region, helical; Pore-forming. The segment at residues 171–177 (HTIGYGH) is an intramembrane region (pore-forming). A Selectivity filter motif is present at residues 172–177 (TIGYGH). Topologically, residues 178-186 (RYITTECYL) are extracellular. The chain crosses the membrane as a helical span at residues 187–208 (AGAIVCLQAICALLLQSFMVGI). The Cytoplasmic segment spans residues 209-544 (VFAKMARPKK…PIHIEIVSET (336 aa)). 2 disordered regions span residues 411 to 448 (HKLE…NSPV) and 512 to 533 (LSDL…SPPV). Residues 438–448 (NHFQSSSNSPV) are compositionally biased toward polar residues.

It belongs to the inward rectifier-type potassium channel (TC 1.A.2.1) family. In terms of tissue distribution, expressed in neurons in the head and tail with no expression detected in non-neuronal cells in these regions. Also detected in the egg-laying system of adult hermaphordites with strong expression in the HSN motor neurons and weak expression in vulval muscles.

The protein localises to the membrane. It localises to the perikaryon. Its subcellular location is the cell projection. Functionally, inward rectifier potassium channels are characterized by a greater tendency to allow potassium to flow into the cell rather than out of it. Required for modulation of the activity of the hermaphrodite-specific neurons (HSNs) by the G-protein coupled neuropeptide receptor egl-6 which in turn controls egg-laying behavior. This chain is Inward rectifier potassium channel irk-1 (irk-1), found in Caenorhabditis elegans.